We begin with the raw amino-acid sequence, 450 residues long: UDP-N-acetylmuramoylalanine--D-glutamate ligase (450 aa).

An ATP-binding site is contributed by 118–124 (GSNAKST).

Belongs to the MurCDEF family.

Its subcellular location is the cytoplasm. It carries out the reaction UDP-N-acetyl-alpha-D-muramoyl-L-alanine + D-glutamate + ATP = UDP-N-acetyl-alpha-D-muramoyl-L-alanyl-D-glutamate + ADP + phosphate + H(+). It participates in cell wall biogenesis; peptidoglycan biosynthesis. Functionally, cell wall formation. Catalyzes the addition of glutamate to the nucleotide precursor UDP-N-acetylmuramoyl-L-alanine (UMA). The protein is UDP-N-acetylmuramoylalanine--D-glutamate ligase of Pseudomonas putida (strain ATCC 47054 / DSM 6125 / CFBP 8728 / NCIMB 11950 / KT2440).